Reading from the N-terminus, the 65-residue chain is uncharacterized protein (65 aa).

This is an uncharacterized protein from Acidianus filamentous virus 1 (isolate United States/Yellowstone) (AFV-1).